The primary structure comprises 556 residues: MQHKDTAVAKDTAKKRLLRRNSAPSAIHIISRLDKKWSFLWNTIDRHNIVEEQDESSAAKSEEEHEDDYELEQLLNMIRIPMFLEKFMLFALLTSLDCFLYYFTVLPIRLIKGYVKQFKSYRQHYRLQQRSGHKNKIPFRYRITSREYKERCMIFIIVISSILLSKLDTSKLYHRIKRQSTMKLYMLFSVLEMADKMLASLGQSLLTVMLSRKNSERILLHKCLLVSMSLTYVTIHGYVLVYQAISLNIAVNSYSNALLTLLLSMQFAEIKSSVLKKFDKEGFFQITIADVVERFKLTLLLSITGLRNLQSWSSSLSNTSINFWSPRSTLSIVINILCGPMVSVVGSEVLVDWAKHAYITKFNRIRPQIYDKFYYIIYKDYSTRTHKLEDRLGLPLPAFVVLFIVMVRPTLFKSSEPSYLPSLFRILFMGASVFLLALLAKFTLDLILIKWSKRIEQRFRDQAFNTVVTEEEYVPGLLSGGMGKVDVSTRIALHSDYNKENRIETESVSPMRKRKTTLTAECTPPSLNDIRRQKDSKNPRSLENVARYKMVSKRIW.

The Cytoplasmic segment spans residues 1 to 87 (MQHKDTAVAK…IRIPMFLEKF (87 aa)). Position 22 is a phosphoserine (S22). Residues 88–108 (MLFALLTSLDCFLYYFTVLPI) traverse the membrane as a helical segment. Residues 109–151 (RLIKGYVKQFKSYRQHYRLQQRSGHKNKIPFRYRITSREYKER) lie on the Lumenal side of the membrane. Residues 152–172 (CMIFIIVISSILLSKLDTSKL) form a helical membrane-spanning segment. Residues 173–224 (YHRIKRQSTMKLYMLFSVLEMADKMLASLGQSLLTVMLSRKNSERILLHKCL) lie on the Cytoplasmic side of the membrane. The chain crosses the membrane as a helical span at residues 225–245 (LVSMSLTYVTIHGYVLVYQAI). Residues 246–330 (SLNIAVNSYS…INFWSPRSTL (85 aa)) lie on the Lumenal side of the membrane. N-linked (GlcNAc...) asparagine glycosylation is present at N318. A helical transmembrane segment spans residues 331-351 (SIVINILCGPMVSVVGSEVLV). Residues 352 to 391 (DWAKHAYITKFNRIRPQIYDKFYYIIYKDYSTRTHKLEDR) lie on the Cytoplasmic side of the membrane. A helical transmembrane segment spans residues 392-412 (LGLPLPAFVVLFIVMVRPTLF). The Lumenal portion of the chain corresponds to 413–428 (KSSEPSYLPSLFRILF). A helical membrane pass occupies residues 429-449 (MGASVFLLALLAKFTLDLILI). Topologically, residues 450–556 (KWSKRIEQRF…RYKMVSKRIW (107 aa)) are cytoplasmic.

It belongs to the TAPT1 family. In terms of assembly, interacts with SLP1.

The protein localises to the endoplasmic reticulum membrane. It localises to the mitochondrion. May be involved in membrane protein folding. This chain is Endoplasmic reticulum membrane protein 65, found in Saccharomyces cerevisiae (strain ATCC 204508 / S288c) (Baker's yeast).